The following is a 224-amino-acid chain: Peptidyl-prolyl cis-trans isomerase FKBP3 (224 aa).

Alanine 2 is subject to N-acetylalanine. Phosphoserine is present on serine 36. The interval 88–118 is disordered; sequence VKLSDDKPKDSKSEETLDEGPPKYTKSILKK. Residues 89-102 are compositionally biased toward basic and acidic residues; it reads KLSDDKPKDSKSEE. N6-acetyllysine is present on lysine 99. The PPIase FKBP-type domain occupies 128-224; that stretch reads GDVVHCWYTG…IFEVELVDID (97 aa). Serine 152 carries the post-translational modification Phosphoserine. The residue at position 170 (lysine 170) is an N6-acetyllysine.

This sequence belongs to the FKBP-type PPIase family.

The protein resides in the nucleus. The catalysed reaction is [protein]-peptidylproline (omega=180) = [protein]-peptidylproline (omega=0). Inhibited preferentially by rapamycin over FK506. In terms of biological role, FK506- and rapamycin-binding proteins (FKBPs) constitute a family of receptors for the two immunosuppressants which inhibit T-cell proliferation by arresting two distinct cytoplasmic signal transmission pathways. PPIases accelerate the folding of proteins. In Mus musculus (Mouse), this protein is Peptidyl-prolyl cis-trans isomerase FKBP3 (Fkbp3).